Consider the following 804-residue polypeptide: Leucine--tRNA ligase (804 aa).

The 'HIGH' region motif lies at 40–51; it reads PYPSGQGLHVGH. The 'KMSKS' region signature appears at 576 to 580; it reads KMSKS. Lysine 579 provides a ligand contact to ATP.

It belongs to the class-I aminoacyl-tRNA synthetase family.

The protein localises to the cytoplasm. The enzyme catalyses tRNA(Leu) + L-leucine + ATP = L-leucyl-tRNA(Leu) + AMP + diphosphate. This chain is Leucine--tRNA ligase, found in Enterococcus faecalis (strain ATCC 700802 / V583).